A 196-amino-acid chain; its full sequence is Protein GrpE (196 aa).

Residues 1 to 41 (MSSKEQKTPEGQAPEEIITEQHDDVEAVEPEVSAEQVDPRD) form a disordered region.

The protein belongs to the GrpE family. Homodimer.

The protein localises to the cytoplasm. Functionally, participates actively in the response to hyperosmotic and heat shock by preventing the aggregation of stress-denatured proteins, in association with DnaK and GrpE. It is the nucleotide exchange factor for DnaK and may function as a thermosensor. Unfolded proteins bind initially to DnaJ; upon interaction with the DnaJ-bound protein, DnaK hydrolyzes its bound ATP, resulting in the formation of a stable complex. GrpE releases ADP from DnaK; ATP binding to DnaK triggers the release of the substrate protein, thus completing the reaction cycle. Several rounds of ATP-dependent interactions between DnaJ, DnaK and GrpE are required for fully efficient folding. This chain is Protein GrpE, found in Klebsiella pneumoniae subsp. pneumoniae (strain ATCC 700721 / MGH 78578).